Consider the following 374-residue polypeptide: N5-carboxyaminoimidazole ribonucleotide synthase (374 aa).

Residues Arg-108, Lys-148, 153 to 159 (GYDGKGQ), 183 to 186 (EQFL), Glu-191, His-214, and 266 to 267 (NE) each bind ATP. The region spanning 112–296 (KQTLQKAGSK…QFDTHILAVT (185 aa)) is the ATP-grasp domain.

It belongs to the PurK/PurT family. In terms of assembly, homodimer.

It carries out the reaction 5-amino-1-(5-phospho-beta-D-ribosyl)imidazole + hydrogencarbonate + ATP = 5-carboxyamino-1-(5-phospho-D-ribosyl)imidazole + ADP + phosphate + 2 H(+). It functions in the pathway purine metabolism; IMP biosynthesis via de novo pathway; 5-amino-1-(5-phospho-D-ribosyl)imidazole-4-carboxylate from 5-amino-1-(5-phospho-D-ribosyl)imidazole (N5-CAIR route): step 1/2. Catalyzes the ATP-dependent conversion of 5-aminoimidazole ribonucleotide (AIR) and HCO(3)(-) to N5-carboxyaminoimidazole ribonucleotide (N5-CAIR). This chain is N5-carboxyaminoimidazole ribonucleotide synthase, found in Staphylococcus haemolyticus (strain JCSC1435).